The following is a 163-amino-acid chain: UPF0763 protein C8J_0930 (163 aa).

This sequence belongs to the UPF0763 family.

The protein is UPF0763 protein C8J_0930 of Campylobacter jejuni subsp. jejuni serotype O:6 (strain 81116 / NCTC 11828).